The primary structure comprises 166 residues: Regulator of ribonuclease activity A (166 aa).

This sequence belongs to the RraA family. In terms of assembly, homotrimer. Binds to both RNA-binding sites in the C-terminal region of Rne and to RhlB.

The protein resides in the cytoplasm. Functionally, globally modulates RNA abundance by binding to RNase E (Rne) and regulating its endonucleolytic activity. Can modulate Rne action in a substrate-dependent manner by altering the composition of the degradosome. Modulates RNA-binding and helicase activities of the degradosome. The polypeptide is Regulator of ribonuclease activity A (Histophilus somni (strain 129Pt) (Haemophilus somnus)).